We begin with the raw amino-acid sequence, 115 residues long: Cholecystokinin (115 aa).

The signal sequence occupies residues 1–20 (MNSGVSLCVLMAVLAAGALT). Positions 21 to 44 (QPVPPAEPAGSGLQRAEEAPRRQL) are excised as a propeptide. The disordered stretch occupies residues 21-51 (QPVPPAEPAGSGLQRAEEAPRRQLRAVQRTD). S31 carries O-linked (Xyl...) (chondroitin sulfate) serine glycosylation. Position 97 is a sulfotyrosine (Y97). A Phenylalanine amide modification is found at F103. The propeptide occupies 107–115 (SAEEYEYPS). 2 positions are modified to sulfotyrosine: Y111 and Y113.

Belongs to the gastrin/cholecystokinin family. As to quaternary structure, binds to CCK-A receptors in the pancreas and CCK-B receptors in the brain. In terms of processing, the precursor is cleaved by proteases to produce a number of active cholecystokinins. The precursor is cleaved by ACE, which removes the Gly-Arg-Arg peptide at the C-terminus, leading to mature hormone.

The protein localises to the secreted. This peptide hormone induces gall bladder contraction and the release of pancreatic enzymes in the gut. Its function in the brain is not clear. Binding to CCK-A receptors stimulates amylase release from the pancreas, binding to CCK-B receptors stimulates gastric acid secretion. The sequence is that of Cholecystokinin (CCK) from Macaca fascicularis (Crab-eating macaque).